We begin with the raw amino-acid sequence, 349 residues long: Tribbles homolog 3 (349 aa).

The interaction with DDIT3/CHOP stretch occupies residues 1–122; that stretch reads MRATSLAASA…QHVARPTEVL (122 aa). The tract at residues 35–57 is disordered; sequence VRDEPEPGPTPSLPPASDLSPAV. In terms of domain architecture, Protein kinase spans 63 to 310; sequence LGPYILLERE…ALGILLHPWL (248 aa). The tract at residues 317 to 349 is disordered; it reads VSPPRSDRREMDQVVPDGPQLEEAEEGEVGLYG. Positions 336–349 are enriched in acidic residues; that stretch reads QLEEAEEGEVGLYG.

Belongs to the protein kinase superfamily. CAMK Ser/Thr protein kinase family. Tribbles subfamily. In terms of assembly, interacts with AKT1, AKT2, MAP2K1 and MAP2K7. Interacts with ATF4. Interacts with DDIT3/CHOP and inhibits its interaction with EP300/P300. Interacts with APOBEC3C. Interacts (via N-terminus) with APOBEC3A. Interacts with RELA. Detected only in the lung. Not detected in the heart, brain, spleen, liver, skeletal muscle, kidney and testis.

The protein resides in the nucleus. Its function is as follows. Inactive protein kinase which acts as a regulator of the integrated stress response (ISR), a process for adaptation to various stress. Inhibits the transcriptional activity of DDIT3/CHOP and is involved in DDIT3/CHOP-dependent cell death during ER stress. May play a role in programmed neuronal cell death but does not appear to affect non-neuronal cells. Acts as a negative feedback regulator of the ATF4-dependent transcription during the ISR: while TRIB3 expression is promoted by ATF4, TRIB3 protein interacts with ATF4 and inhibits ATF4 transcription activity. Disrupts insulin signaling by binding directly to Akt kinases and blocking their activation. May bind directly to and mask the 'Thr-308' phosphorylation site in AKT1. Interacts with the NF-kappa-B transactivator p65 RELA and inhibits its phosphorylation and thus its transcriptional activation activity. Interacts with MAPK kinases and regulates activation of MAP kinases. Can inhibit APOBEC3A editing of nuclear DNA. This Rattus norvegicus (Rat) protein is Tribbles homolog 3 (Trib3).